Here is a 494-residue protein sequence, read N- to C-terminus: 4-trimethylaminobutyraldehyde dehydrogenase (494 aa).

Position 2 is an N-acetylserine (Ser-2). The residue at position 30 (Lys-30) is an N6-acetyllysine; alternate. Position 30 is an N6-succinyllysine; alternate (Lys-30). Lys-59 is modified (N6-succinyllysine). Residues Lys-180 and 232-236 (GSVPT) each bind NAD(+). Glu-254 (proton acceptor) is an active-site residue. Cys-288 serves as the catalytic Nucleophile. Lys-298 carries the N6-acetyllysine modification. Lys-303 carries the post-translational modification N6-acetyllysine; alternate. Lys-303 is modified (N6-succinyllysine; alternate). N6-acetyllysine is present on Lys-344. Glu-391 provides a ligand contact to NAD(+).

The protein belongs to the aldehyde dehydrogenase family. In terms of assembly, homotetramer.

The protein resides in the cytoplasm. It localises to the cytosol. It catalyses the reaction 4-(trimethylamino)butanal + NAD(+) + H2O = 4-(trimethylamino)butanoate + NADH + 2 H(+). The catalysed reaction is an aldehyde + NAD(+) + H2O = a carboxylate + NADH + 2 H(+). The enzyme catalyses 4-aminobutanal + NAD(+) + H2O = 4-aminobutanoate + NADH + 2 H(+). It carries out the reaction formaldehyde + NAD(+) + H2O = formate + NADH + 2 H(+). It catalyses the reaction acetaldehyde + NAD(+) + H2O = acetate + NADH + 2 H(+). The catalysed reaction is imidazole-4-acetaldehyde + NAD(+) + H2O = imidazole-4-acetate + NADH + 2 H(+). The enzyme catalyses acrolein + NAD(+) + H2O = acrylate + NADH + 2 H(+). It carries out the reaction (5-hydroxyindol-3-yl)acetaldehyde + NAD(+) + H2O = (5-hydroxyindol-3-yl)acetate + NADH + 2 H(+). It catalyses the reaction 3,4-dihydroxyphenylacetaldehyde + NAD(+) + H2O = 3,4-dihydroxyphenylacetate + NADH + 2 H(+). The catalysed reaction is spermine monoaldehyde + NAD(+) + H2O = N-(2-carboxyethyl)spermidine + NADH + 2 H(+). The enzyme catalyses propanal + NAD(+) + H2O = propanoate + NADH + 2 H(+). It carries out the reaction butanal + NAD(+) + H2O = butanoate + NADH + 2 H(+). It catalyses the reaction pentanal + NAD(+) + H2O = pentanoate + NADH + 2 H(+). The catalysed reaction is hexanal + NAD(+) + H2O = hexanoate + NADH + 2 H(+). Its pathway is amine and polyamine biosynthesis; carnitine biosynthesis. Converts gamma-trimethylaminobutyraldehyde into gamma-butyrobetaine with high efficiency (in vitro). Can catalyze the irreversible oxidation of a broad range of aldehydes to the corresponding acids in an NAD-dependent reaction, but with low efficiency. Catalyzes the oxidation of aldehydes arising from biogenic amines and polyamines. The sequence is that of 4-trimethylaminobutyraldehyde dehydrogenase from Mus musculus (Mouse).